The primary structure comprises 245 residues: tRNA1(Val) (adenine(37)-N6)-methyltransferase (245 aa).

Belongs to the methyltransferase superfamily. tRNA (adenine-N(6)-)-methyltransferase family.

The protein resides in the cytoplasm. The catalysed reaction is adenosine(37) in tRNA1(Val) + S-adenosyl-L-methionine = N(6)-methyladenosine(37) in tRNA1(Val) + S-adenosyl-L-homocysteine + H(+). Its function is as follows. Specifically methylates the adenine in position 37 of tRNA(1)(Val) (anticodon cmo5UAC). This Shigella sonnei (strain Ss046) protein is tRNA1(Val) (adenine(37)-N6)-methyltransferase.